A 37-amino-acid chain; its full sequence is Large ribosomal subunit protein bL36 (37 aa).

This sequence belongs to the bacterial ribosomal protein bL36 family.

This Helicobacter pylori (strain ATCC 700392 / 26695) (Campylobacter pylori) protein is Large ribosomal subunit protein bL36.